We begin with the raw amino-acid sequence, 20 residues long: Superoxide dismutase [Fe] (20 aa).

This sequence belongs to the iron/manganese superoxide dismutase family. In terms of assembly, homodimer. The cofactor is Fe cation.

It localises to the periplasm. The enzyme catalyses 2 superoxide + 2 H(+) = H2O2 + O2. In terms of biological role, destroys superoxide anion radicals which are normally produced within the cells and which are toxic to biological systems. The polypeptide is Superoxide dismutase [Fe] (sodB) (Photobacterium damsela subsp. piscicida (Pasteurella piscicida)).